The following is a 156-amino-acid chain: Bacterial ferritin (156 aa).

The region spanning 1–146 (MKGKPAVLAQ…KQLGLIEKIG (146 aa)) is the Ferritin-like diiron domain. The Fe cation site is built by glutamate 18, glutamate 51, histidine 54, glutamate 94, glutamate 128, and histidine 131.

It belongs to the bacterioferritin family. As to quaternary structure, the bacterioferritin (BFR) complex is formed of 24 subunits (BfrA and BfrB) of unknown stoichiometry. The BFR is arranged as 12 dimers that are packed together to form an approximately spherical molecule with a central cavity, in which large amounts of iron can be deposited.

The protein resides in the cytoplasm. The enzyme catalyses 4 Fe(2+) + O2 + 4 H(+) = 4 Fe(3+) + 2 H2O. The catalysed reaction is Fe(2+)(in) = Fe(2+)(out). Its function is as follows. Part of the iron-storage bacterioferritin (BFR) complex which stores about 50% of intracellular iron. Iron-storage protein, whose ferroxidase center binds Fe(2+), oxidizes it using dioxygen to Fe(3+), and participates in the subsequent Fe(3+) oxide mineral core formation within the central cavity of the BFR protein shell. BFR rapidly binds iron in labeling experiments in vivo during iron-limiting conditions. This chain is Bacterial ferritin, found in Synechocystis sp. (strain ATCC 27184 / PCC 6803 / Kazusa).